Here is a 337-residue protein sequence, read N- to C-terminus: Phosphatidate cytidylyltransferase, mitochondrial (337 aa).

It belongs to the TAM41 family. Mg(2+) is required as a cofactor. Brain and liver.

The protein resides in the mitochondrion inner membrane. The enzyme catalyses a 1,2-diacyl-sn-glycero-3-phosphate + CTP + H(+) = a CDP-1,2-diacyl-sn-glycerol + diphosphate. It functions in the pathway phospholipid metabolism; CDP-diacylglycerol biosynthesis; CDP-diacylglycerol from sn-glycerol 3-phosphate: step 3/3. Its function is as follows. Catalyzes the conversion of phosphatidic acid (PA) to CDP-diacylglycerol (CDP-DAG), an essential intermediate in the synthesis of phosphatidylglycerol, cardiolipin and phosphatidylinositol. The protein is Phosphatidate cytidylyltransferase, mitochondrial (Tamm41) of Rattus norvegicus (Rat).